The following is a 230-amino-acid chain: Flagellar L-ring protein (230 aa).

The first 16 residues, 1-16 (MYLVFGIIFTSVIVTS), serve as a signal peptide directing secretion. Cys-17 carries N-palmitoyl cysteine lipidation. The S-diacylglycerol cysteine moiety is linked to residue Cys-17.

Belongs to the FlgH family. As to quaternary structure, the basal body constitutes a major portion of the flagellar organelle and consists of four rings (L,P,S, and M) mounted on a central rod.

The protein resides in the cell outer membrane. The protein localises to the bacterial flagellum basal body. In terms of biological role, assembles around the rod to form the L-ring and probably protects the motor/basal body from shearing forces during rotation. The protein is Flagellar L-ring protein of Bartonella bacilliformis (strain ATCC 35685 / KC583 / Herrer 020/F12,63).